A 60-amino-acid chain; its full sequence is UPF0434 protein NMCC_0628 (60 aa).

Belongs to the UPF0434 family.

In Neisseria meningitidis serogroup C (strain 053442), this protein is UPF0434 protein NMCC_0628.